The chain runs to 752 residues: Translation initiation factor IF-2 (752 aa).

A compositionally biased stretch (basic and acidic residues) spans 148–159 (KKVKDKNKKEEP). The tract at residues 148-170 (KKVKDKNKKEEPAVTPSTAPRKK) is disordered. The 170-residue stretch at 250-419 (PRPPIVTVMG…ALQAEIMELK (170 aa)) folds into the tr-type G domain. Residues 259–266 (GHVDHGKT) form a G1 region. 259–266 (GHVDHGKT) is a binding site for GTP. The interval 284–288 (GITQH) is G2. The tract at residues 305-308 (DTPG) is G3. Residues 305–309 (DTPGH) and 359–362 (NKID) contribute to the GTP site. The tract at residues 359–362 (NKID) is G4. Residues 395–397 (SAK) are G5.

It belongs to the TRAFAC class translation factor GTPase superfamily. Classic translation factor GTPase family. IF-2 subfamily.

It is found in the cytoplasm. Functionally, one of the essential components for the initiation of protein synthesis. Protects formylmethionyl-tRNA from spontaneous hydrolysis and promotes its binding to the 30S ribosomal subunits. Also involved in the hydrolysis of GTP during the formation of the 70S ribosomal complex. The sequence is that of Translation initiation factor IF-2 from Thermodesulfovibrio yellowstonii (strain ATCC 51303 / DSM 11347 / YP87).